Reading from the N-terminus, the 859-residue chain is Low-density lipoprotein receptor-related protein 12 (859 aa).

The signal sequence occupies residues 1-32; sequence MARRWSTKESPRWRSALLLLFLAGVYGNGALA. The Extracellular portion of the chain corresponds to 33–492; the sequence is EHSENVHISG…ENCPVIVPTR (460 aa). Cystine bridges form between Cys-47–Cys-76 and Cys-103–Cys-122. One can recognise a CUB 1 domain in the interval 47–159; the sequence is CGETPEQIRA…KGFRLAYFSG (113 aa). A glycan (N-linked (GlcNAc...) asparagine) is linked at Asn-75. Asn-146 carries an N-linked (GlcNAc...) asparagine glycan. 2 LDL-receptor class A domains span residues 165–201 and 214–255; these read NCAC…EICA and PCAY…IDCD. Disulfide bonds link Cys-166/Cys-178, Cys-173/Cys-191, Cys-185/Cys-200, Cys-215/Cys-232, Cys-222/Cys-245, Cys-239/Cys-254, and Cys-259/Cys-285. The CUB 2 domain maps to 259–372; that stretch reads CGQWLKYFYG…RGFNATYQVD (114 aa). 2 N-linked (GlcNAc...) asparagine glycosylation sites follow: Asn-284 and Asn-366. LDL-receptor class A domains are found at residues 374–411, 412–449, and 450–486; these read FCLP…INCT, MCQK…KNCF, and FCQP…ENCP. 9 cysteine pairs are disulfide-bonded: Cys-375–Cys-388, Cys-382–Cys-401, Cys-395–Cys-410, Cys-413–Cys-426, Cys-420–Cys-439, Cys-433–Cys-448, Cys-451–Cys-463, Cys-458–Cys-476, and Cys-470–Cys-485. The N-linked (GlcNAc...) asparagine glycan is linked to Asn-409. A glycan (N-linked (GlcNAc...) asparagine) is linked at Asn-441. A helical transmembrane segment spans residues 493 to 513; it reads VITAAVIGSLICGLLLVIALG. The Cytoplasmic portion of the chain corresponds to 514 to 859; sequence CTCKLYSLRM…TSDDEALLLC (346 aa). Disordered regions lie at residues 623-678, 693-723, 748-770, and 802-823; these read ADGD…LPQK, ASSS…SPAR, SSVS…REDD, and QGQG…SNRD. 2 stretches are compositionally biased toward polar residues: residues 748–757 and 802–814; these read SSVSQNQSPL and QGQG…NATN.

Belongs to the LDLR family. As to quaternary structure, may interact with RACK1, ZFYVE9 and NMRK2.

It is found in the membrane. The protein resides in the coated pit. Probable receptor, which may be involved in the internalization of lipophilic molecules and/or signal transduction. May act as a tumor suppressor. This is Low-density lipoprotein receptor-related protein 12 (LRP12) from Pongo abelii (Sumatran orangutan).